A 255-amino-acid chain; its full sequence is Endonuclease V (255 aa).

Mg(2+) contacts are provided by Asp-42 and Asp-110.

This sequence belongs to the endonuclease V family. Mg(2+) is required as a cofactor.

Its subcellular location is the cytoplasm. It catalyses the reaction Endonucleolytic cleavage at apurinic or apyrimidinic sites to products with a 5'-phosphate.. Functionally, DNA repair enzyme involved in the repair of deaminated bases. Selectively cleaves double-stranded DNA at the second phosphodiester bond 3' to a deoxyinosine leaving behind the intact lesion on the nicked DNA. This chain is Endonuclease V, found in Aeropyrum pernix (strain ATCC 700893 / DSM 11879 / JCM 9820 / NBRC 100138 / K1).